A 288-amino-acid polypeptide reads, in one-letter code: Polyamine aminopropyltransferase (288 aa).

One can recognise a PABS domain in the interval 11 to 245 (IEWYPRGYGV…SPWSFLVGVK (235 aa)). Gln36 lines the S-methyl-5'-thioadenosine pocket. Residues His67 and Asp91 each contribute to the spermidine site. S-methyl-5'-thioadenosine contacts are provided by residues Glu111 and 148–149 (DG). The active-site Proton acceptor is the Asp166. 166 to 169 (DSTD) contacts spermidine. Residue Pro173 participates in S-methyl-5'-thioadenosine binding.

Belongs to the spermidine/spermine synthase family. Homodimer or homotetramer.

It localises to the cytoplasm. The enzyme catalyses S-adenosyl 3-(methylsulfanyl)propylamine + agmatine = N(1)-(3-aminopropyl)agmatine + S-methyl-5'-thioadenosine + H(+). The catalysed reaction is S-adenosyl 3-(methylsulfanyl)propylamine + putrescine = S-methyl-5'-thioadenosine + spermidine + H(+). It catalyses the reaction cadaverine + S-adenosyl 3-(methylsulfanyl)propylamine = aminopropylcadaverine + S-methyl-5'-thioadenosine + H(+). It participates in amine and polyamine biosynthesis; spermidine biosynthesis; spermidine from putrescine: step 1/1. Functionally, involved in the biosynthesis of polyamines which are thought to support the growth of thermophilic microorganisms under high-temperature conditions. It seems that long-chain and branched-chain of polyamines effectively stabilize DNA and RNA, respectively. Catalyzes the irreversible transfer of a propylamine group from the amino donor S-adenosylmethioninamine (decarboxy-AdoMet) to agmatine to yield N1-aminopropylagmatine. It can also use cadaverine (1,5-diaminopentane) and putrescine (1,4-diaminobutane) as substrate with a lower activity than that of agmatine. The reaction involves a nucleophilic attack on the C-3 methylene of the propylamine moiety adjacent to the positively charged sulfur of decarboxy-AdoMet. This is Polyamine aminopropyltransferase from Thermococcus kodakarensis (strain ATCC BAA-918 / JCM 12380 / KOD1) (Pyrococcus kodakaraensis (strain KOD1)).